The following is a 539-amino-acid chain: Probable 1,4-beta-D-glucan cellobiohydrolase B (539 aa).

A signal peptide spans 1-26 (MLPSTISYRIYKNALFFAALFGAVQA). Residues 27-461 (QKVGTSKAEV…SNIKVGPIGS (435 aa)) are catalytic. N-linked (GlcNAc...) asparagine glycosylation occurs at Asn90. Glu238 acts as the Nucleophile in catalysis. The active-site Proton donor is the Glu243. N-linked (GlcNAc...) asparagine glycans are attached at residues Asn296 and Asn495. The interval 462 to 503 (TFNSGGSNPGGSTTTTKPATSTTTTKATTTATTNTTGPTGTG) is thr-rich linker. Over residues 462 to 503 (TFNSGGSNPGGSTTTTKPATSTTTTKATTTATTNTTGPTGTG) the composition is skewed to low complexity. The interval 462–504 (TFNSGGSNPGGSTTTTKPATSTTTTKATTTATTNTTGPTGTGV) is disordered. In terms of domain architecture, CBM1 spans 503 to 539 (GVAQPWAQCGGIGYSGPTQCAAPYTCTKQNDYYSQCL). 2 disulfide bridges follow: Cys511/Cys528 and Cys522/Cys538.

Belongs to the glycosyl hydrolase 7 (cellulase C) family.

Its subcellular location is the secreted. It carries out the reaction Hydrolysis of (1-&gt;4)-beta-D-glucosidic linkages in cellulose and cellotetraose, releasing cellobiose from the non-reducing ends of the chains.. Its function is as follows. The biological conversion of cellulose to glucose generally requires three types of hydrolytic enzymes: (1) Endoglucanases which cut internal beta-1,4-glucosidic bonds; (2) Exocellobiohydrolases that cut the disaccharide cellobiose from the non-reducing end of the cellulose polymer chain; (3) Beta-1,4-glucosidases which hydrolyze the cellobiose and other short cello-oligosaccharides to glucose. The sequence is that of Probable 1,4-beta-D-glucan cellobiohydrolase B (cbhB) from Aspergillus clavatus (strain ATCC 1007 / CBS 513.65 / DSM 816 / NCTC 3887 / NRRL 1 / QM 1276 / 107).